The chain runs to 963 residues: MARNNLEKMASIDAQMRLLVPGKVSEDDKLIEYDALLLDRFLDILQDLHGEDIRAMVQECYERSGEYEGKNDPHKLEELGNVLTSLDPGDSIVVASSFSHMLNLANLAEEVQIAYRRRNKIKRGGFADESNATTESDIEETFKRLVNQLGKSPAEVFDALKNQTVDLVLTAHPTQSVRRSLLQKHARIRNCLSQLYGKDITPDEKQELDEALLREIQAAFRTDEIRRTPPTPQDEMRAGMSYFHETIWKGVPKFLRRIDTALKSIGINERVPYNAPLIQFSSWMGGDRDGNPRVTPEVTRDVCLLARMMAANLYYSQIEDLMFELSMWRCSDELRARALQLHSASKKDAKHYIEFWKQIPPNEPFRVILGDVRDKLYNTRERTRQLLSNGISDIPEEVTFTNIDEFLEPLELCYRSLCSTGDQPIADGSLLDFMRQVSTFGLSFVKLDIRQESDRHSDVADAITRHLGIGSYKEWSEEQRQAWLLSELQGKRPLFGPDLPKTDEVRDVLDTFHVISELPADNFGAYIISMATAASDVLVVELLQRECHVKKPLRVVPLFEKLADLEAAPAALARLFSINWYRNRIDGKQEVMIGYSDSGKDAGRLSAGWALYKAQEDLIKVAKEFGIKLTMFHGRGGTVGRGGGPTHLAILSQPPDTIHGSFRVTVQGEVIEQSFGEEHLCFRTLQRFTAATLEHGMRPPVAPKPEWRELMDEMAVVATKEYRSIVFQDPRFVEYFRSATPELEYGRMNIGSRPSKRKPSGGIESLRAIPWIFAWTQTRFHLPVWLGFGAAFKHVMEKDIRNLHMLQQMYNEWPFFRVTIDLIEMVFAKGDPGIAALYDKLLVSDDLWAIGEKLRANYGETKDLLLQVAGHKDLLEGDPYLKQRLRLRDSYITTLNVCQAYTLKRIRDPNYHVNLRPHLSKESSTKPAAELVKLNPTSEYAPGLEDTLILTMKGIAAGMQNTG.

Residue Ser11 is modified to Phosphoserine. Active-site residues include His172 and Lys600.

This sequence belongs to the PEPCase type 1 family. Homotetramer. Mg(2+) is required as a cofactor.

Its subcellular location is the cytoplasm. The enzyme catalyses oxaloacetate + phosphate = phosphoenolpyruvate + hydrogencarbonate. Its activity is regulated as follows. By light-reversible phosphorylation. Through the carboxylation of phosphoenolpyruvate (PEP) it forms oxaloacetate, a four-carbon dicarboxylic acid source for the tricarboxylic acid cycle. The sequence is that of Phosphoenolpyruvate carboxylase (PPC) from Picea abies (Norway spruce).